Here is a 581-residue protein sequence, read N- to C-terminus: Alpha-amylase 2 (581 aa).

The signal sequence occupies residues 1–24 (MNYRRNICLRIGWMLLFAFIPAYA). Cysteine 56 and cysteine 64 are oxidised to a cystine. Tryptophan 109 is a binding site for substrate. Asparagine 147 lines the Ca(2+) pocket. Residues cysteine 176 and cysteine 191 are joined by a disulfide bond. Aspartate 202 provides a ligand contact to Ca(2+). Arginine 231 provides a ligand contact to substrate. Positions 233, 237, and 257 each coordinate Ca(2+). Aspartate 233 functions as the Nucleophile in the catalytic mechanism. Residue 236–237 (KH) coordinates substrate. The active-site Proton donor is glutamate 257. Glycine 261 provides a ligand contact to substrate. A disulfide bridge links cysteine 267 with cysteine 311. Asparagine 291 is a glycosylation site (N-linked (GlcNAc...) asparagine). A substrate-binding site is contributed by aspartate 325. Residue asparagine 332 is glycosylated (N-linked (GlcNAc...) asparagine). Arginine 372 lines the substrate pocket. A lipid anchor (GPI-anchor amidated serine) is attached at serine 551. The propeptide at 552–581 (EAKTIRSFTKLKLFILLIAVPFALPMIILI) is removed in mature form.

This sequence belongs to the glycosyl hydrolase 13 family. Ca(2+) is required as a cofactor.

The protein localises to the cell membrane. The enzyme catalyses Endohydrolysis of (1-&gt;4)-alpha-D-glucosidic linkages in polysaccharides containing three or more (1-&gt;4)-alpha-linked D-glucose units.. This chain is Alpha-amylase 2 (aah2), found in Schizosaccharomyces pombe (strain 972 / ATCC 24843) (Fission yeast).